The sequence spans 598 residues: Nitrate/nitrite sensor protein NarX (598 aa).

The Cytoplasmic portion of the chain corresponds to 1-14 (MLKRCLSPLTLVNQ). The helical transmembrane segment at 15–37 (VALIVLLSTAIGLAGMAVSGWLV) threads the bilayer. Residues 38–151 (QGVQGSAHAI…DRTTEMRIET (114 aa)) are Periplasmic-facing. The helical transmembrane segment at 152–174 (VVLVHRVMAVFMALLLVFTIIWL) threads the bilayer. The Cytoplasmic segment spans residues 175–598 (RARLLQPWRQ…FTDVQGDTHE (424 aa)). The region spanning 176-228 (ARLLQPWRQLLAMASAVSHRDFTQRANISGRNEMAMLGTALNNMSAELAESYA) is the HAMP domain. In terms of domain architecture, Histidine kinase spans 393–587 (TIARELHDSI…EVVVTFIPEK (195 aa)). Phosphohistidine; by autocatalysis is present on histidine 399.

It localises to the cell inner membrane. It catalyses the reaction ATP + protein L-histidine = ADP + protein N-phospho-L-histidine.. Acts as a sensor for nitrate/nitrite and transduces signal of nitrate availability to the NarL protein and of both nitrate/nitrite to the NarP protein. NarX probably activates NarL and NarP by phosphorylation in the presence of nitrate. NarX also plays a negative role in controlling NarL activity, probably through dephosphorylation in the absence of nitrate. The protein is Nitrate/nitrite sensor protein NarX (narX) of Escherichia coli O157:H7.